A 428-amino-acid chain; its full sequence is Serine--tRNA ligase (428 aa).

Residue 231–233 (TAE) participates in L-serine binding. Residue 262 to 264 (RSE) coordinates ATP. E285 is an L-serine binding site. Residue 349 to 352 (EISS) coordinates ATP. S385 lines the L-serine pocket.

It belongs to the class-II aminoacyl-tRNA synthetase family. Type-1 seryl-tRNA synthetase subfamily. In terms of assembly, homodimer. The tRNA molecule binds across the dimer.

The protein localises to the cytoplasm. It catalyses the reaction tRNA(Ser) + L-serine + ATP = L-seryl-tRNA(Ser) + AMP + diphosphate + H(+). The catalysed reaction is tRNA(Sec) + L-serine + ATP = L-seryl-tRNA(Sec) + AMP + diphosphate + H(+). The protein operates within aminoacyl-tRNA biosynthesis; selenocysteinyl-tRNA(Sec) biosynthesis; L-seryl-tRNA(Sec) from L-serine and tRNA(Sec): step 1/1. Its function is as follows. Catalyzes the attachment of serine to tRNA(Ser). Is also able to aminoacylate tRNA(Sec) with serine, to form the misacylated tRNA L-seryl-tRNA(Sec), which will be further converted into selenocysteinyl-tRNA(Sec). The protein is Serine--tRNA ligase of Staphylococcus aureus (strain USA300).